We begin with the raw amino-acid sequence, 158 residues long: uncharacterized protein (158 aa).

Helical transmembrane passes span 10 to 30 (LFFIFSGGLVFFFFEFFLNHF) and 40 to 60 (YITFYFIKNHPSLFLLFNFFL).

It localises to the membrane. This is an uncharacterized protein from Schizosaccharomyces pombe (strain 972 / ATCC 24843) (Fission yeast).